The following is a 222-amino-acid chain: Disulfide bond formation protein D (222 aa).

The first 36 residues, 1-36 (MKKKQQSSAKFAVILTVVVVVLLAAIVIINNKTEQG), serve as a signal peptide directing secretion. A Thioredoxin domain is found at 37–220 (NDAVSGQPSI…IKETIEKELK (184 aa)). A disulfide bridge connects residues Cys-69 and Cys-72.

The protein belongs to the thioredoxin family. DsbA subfamily.

The protein localises to the cell membrane. Its subcellular location is the membrane raft. Its function is as follows. Required for the stabilization, possibly via formation of a disulfide bond, of the obligatory competence protein ComGC. May be required for the stability of secreted proteins with disulfide bonds. Not required for sporulation. In Bacillus subtilis (strain 168), this protein is Disulfide bond formation protein D (bdbD).